The sequence spans 58 residues: Photosystem II reaction center protein K (58 aa).

A propeptide spanning residues 1 to 21 (MFDLYLKNLLDLSDSGTVVLA) is cleaved from the precursor. The helical transmembrane segment at 29 to 49 (IFDPIVDVLPVIPVFFLLLAF) threads the bilayer.

It belongs to the PsbK family. In terms of assembly, PSII is composed of 1 copy each of membrane proteins PsbA, PsbB, PsbC, PsbD, PsbE, PsbF, PsbH, PsbI, PsbJ, PsbK, PsbL, PsbM, PsbT, PsbX, PsbY, PsbZ, Psb30/Ycf12, at least 3 peripheral proteins of the oxygen-evolving complex and a large number of cofactors. It forms dimeric complexes.

The protein localises to the plastid. The protein resides in the chloroplast thylakoid membrane. In terms of biological role, one of the components of the core complex of photosystem II (PSII). PSII is a light-driven water:plastoquinone oxidoreductase that uses light energy to abstract electrons from H(2)O, generating O(2) and a proton gradient subsequently used for ATP formation. It consists of a core antenna complex that captures photons, and an electron transfer chain that converts photonic excitation into a charge separation. This is Photosystem II reaction center protein K from Zygnema circumcarinatum (Green alga).